A 140-amino-acid polypeptide reads, in one-letter code: Prepilin peptidase-dependent protein A (140 aa).

A propeptide spanning residues 1–23 (MLLLKASAICGKGNEGKRNKKGG) is cleaved from the precursor. Residue Phe-24 is modified to N-methylphenylalanine. A helical membrane pass occupies residues 24-44 (FTLIELTVVLAIMAIILMVIA).

The protein resides in the membrane. In terms of biological role, not yet known. This Clostridium perfringens (strain 13 / Type A) protein is Prepilin peptidase-dependent protein A (ppdA).